A 37-amino-acid chain; its full sequence is Large ribosomal subunit protein bL36 (37 aa).

Belongs to the bacterial ribosomal protein bL36 family.

In Caldanaerobacter subterraneus subsp. tengcongensis (strain DSM 15242 / JCM 11007 / NBRC 100824 / MB4) (Thermoanaerobacter tengcongensis), this protein is Large ribosomal subunit protein bL36.